The chain runs to 562 residues: Carboxylesterase 1E (562 aa).

Residues 1 to 19 form the signal peptide; it reads MCLSALILVSLAAFTAGAG. Asparagine 80 carries N-linked (GlcNAc...) asparagine glycosylation. A disulfide bond links cysteine 88 and cysteine 117. Serine 222 functions as the Acyl-ester intermediate in the catalytic mechanism. Cysteine 274 and cysteine 285 form a disulfide bridge. Asparagine 276 is a glycosylation site (N-linked (GlcNAc...) asparagine). Catalysis depends on charge relay system residues glutamate 354 and histidine 467. Asparagine 490 carries N-linked (GlcNAc...) asparagine glycosylation. The Prevents secretion from ER motif lies at 559-562; that stretch reads HTEL.

The protein belongs to the type-B carboxylesterase/lipase family.

The protein localises to the endoplasmic reticulum lumen. It is found in the microsome membrane. The enzyme catalyses a carboxylic ester + H2O = an alcohol + a carboxylate + H(+). The catalysed reaction is all-trans-retinyl hexadecanoate + H2O = all-trans-retinol + hexadecanoate + H(+). In terms of biological role, involved in the detoxification of xenobiotics and in the activation of ester and amide prodrugs. Hydrolyzes retinyl esters. The sequence is that of Carboxylesterase 1E from Mus musculus (Mouse).